The primary structure comprises 1349 residues: Protein strawberry notch homolog 2 (1349 aa).

Disordered regions lie at residues 170–212 (YQSH…QHPD), 609–633 (STRR…PKAS), and 1319–1349 (PTET…FPNS). Residues 177–188 (EEEEGEEEEETE) are compositionally biased toward acidic residues. Basic residues predominate over residues 609–631 (STRRRRDRGGGKRKRRPRGRGPK).

This sequence belongs to the SBNO family. In terms of assembly, interacts with TAL1; this interaction inhibits TAL1 occupancy of the DCSTAMP promoter, leading to the activation of the DCSTAMP promoter by the transcription factor MITF. Expressed in the spleen and bone marrow, and to a lesser extent in the kidney, liver, brain, skin, heart and muscle. Expressed predominantly in osteoclasts, and to a lesser extent in T-cells, B-cells and osteoblasts. Expressed in macrophages.

In terms of biological role, acts as a transcriptional coregulator, that can have both coactivator and corepressor functions. Inhibits the DCSTAMP-repressive activity of TAL1, hence enhancing the access of the transcription factor MITF to the DC-STAMP promoter in osteoclast. Plays a role in bone homeostasis; required as a positive regulator in TNFSF11//RANKL-mediated osteoclast fusion via a DCSTAMP-dependent pathway. May also be required in the regulation of osteoblast differentiation. Involved in the transcriptional corepression of NF-kappaB in macrophages. Plays a role as a regulator in the pro-inflammatory cascade. This Mus musculus (Mouse) protein is Protein strawberry notch homolog 2 (Sbno2).